A 732-amino-acid polypeptide reads, in one-letter code: Lanosterol synthase (732 aa).

Position 2 is an N-acetylthreonine (Thr2). PFTB repeat units follow at residues 77–121, 124–165, 424–468, 483–528, 560–600, 612–653, and 670–712; these read ALNG…PLPA, REEI…RILG, PDNP…LLLQ, LCDA…MIDY, LTQG…ACMG, VSRA…HNTC, and QERG…NIFP. The Proton donor role is filled by Asp455.

It belongs to the terpene cyclase/mutase family. As to quaternary structure, monomer. In terms of tissue distribution, widely expressed. Expressed in the hair bulb, the outer root sheath and hair matrix of the hair follicle epithelium. Also detected in dermal papilla, epidermis, sweat glands, sebaceous glands, and blood vessels.

It is found in the endoplasmic reticulum membrane. It carries out the reaction (S)-2,3-epoxysqualene = lanosterol. The protein operates within terpene metabolism; lanosterol biosynthesis; lanosterol from farnesyl diphosphate: step 3/3. Functionally, key enzyme in the cholesterol biosynthesis pathway. Catalyzes the cyclization of (S)-2,3 oxidosqualene to lanosterol, a reaction that forms the sterol nucleus. Through the production of lanosterol may regulate lens protein aggregation and increase transparency. The protein is Lanosterol synthase (LSS) of Homo sapiens (Human).